Reading from the N-terminus, the 335-residue chain is Glyceraldehyde-3-phosphate dehydrogenase 2 (335 aa).

Residues 13–14 (RI), aspartate 34, and methionine 79 each bind NAD(+). D-glyceraldehyde 3-phosphate is bound by residues 151-153 (SCT), threonine 182, 211-212 (TG), and arginine 234. The active-site Nucleophile is cysteine 152. Asparagine 316 serves as a coordination point for NAD(+).

This sequence belongs to the glyceraldehyde-3-phosphate dehydrogenase family. Homotetramer.

Its subcellular location is the cytoplasm. It carries out the reaction D-glyceraldehyde 3-phosphate + phosphate + NAD(+) = (2R)-3-phospho-glyceroyl phosphate + NADH + H(+). The protein operates within carbohydrate degradation; glycolysis; pyruvate from D-glyceraldehyde 3-phosphate: step 1/5. Its function is as follows. Glyceraldehyde-3-phosphate dehydrogenase is a key enzyme in glycolysis that catalyzes the first step of the pathway by converting D-glyceraldehyde 3-phosphate (G3P) into 3-phospho-D-glyceroyl phosphate. This is Glyceraldehyde-3-phosphate dehydrogenase 2 (gapdh-2) from Danio rerio (Zebrafish).